Reading from the N-terminus, the 165-residue chain is Nucleotide-binding protein P9215_05621 (165 aa).

The protein belongs to the YajQ family.

Nucleotide-binding protein. The chain is Nucleotide-binding protein P9215_05621 from Prochlorococcus marinus (strain MIT 9215).